Here is a 329-residue protein sequence, read N- to C-terminus: Pantothenate kinase (329 aa).

Residues 1-21 (MISPVPSIPRSAHRQRPEATP) are disordered. 107 to 114 (GSVAVGKS) provides a ligand contact to ATP.

Belongs to the prokaryotic pantothenate kinase family.

It localises to the cytoplasm. The enzyme catalyses (R)-pantothenate + ATP = (R)-4'-phosphopantothenate + ADP + H(+). It participates in cofactor biosynthesis; coenzyme A biosynthesis; CoA from (R)-pantothenate: step 1/5. The polypeptide is Pantothenate kinase (coaA) (Streptomyces coelicolor (strain ATCC BAA-471 / A3(2) / M145)).